A 736-amino-acid chain; its full sequence is Acyl-coenzyme A oxidase (736 aa).

Belongs to the acyl-CoA oxidase family. FAD serves as cofactor.

It localises to the peroxisome. It carries out the reaction a 2,3-saturated acyl-CoA + O2 = a (2E)-enoyl-CoA + H2O2. It functions in the pathway lipid metabolism; peroxisomal fatty acid beta-oxidation. This Kluyveromyces lactis (strain ATCC 8585 / CBS 2359 / DSM 70799 / NBRC 1267 / NRRL Y-1140 / WM37) (Yeast) protein is Acyl-coenzyme A oxidase (POX1).